The following is a 201-amino-acid chain: Small ribosomal subunit protein uS4c (201 aa).

The 64-residue stretch at 90-153 folds into the S4 RNA-binding domain; that stretch reads MRLDNVIFRL…SSQNLVKRYL (64 aa).

This sequence belongs to the universal ribosomal protein uS4 family. In terms of assembly, part of the 30S ribosomal subunit. Contacts protein S5. The interaction surface between S4 and S5 is involved in control of translational fidelity.

Its subcellular location is the plastid. The protein resides in the chloroplast. One of the primary rRNA binding proteins, it binds directly to 16S rRNA where it nucleates assembly of the body of the 30S subunit. In terms of biological role, with S5 and S12 plays an important role in translational accuracy. This is Small ribosomal subunit protein uS4c (rps4) from Gracilaria tenuistipitata var. liui (Red alga).